Consider the following 365-residue polypeptide: Histidinol-phosphate aminotransferase 2 (365 aa).

Position 221 is an N6-(pyridoxal phosphate)lysine (Lys221).

Belongs to the class-II pyridoxal-phosphate-dependent aminotransferase family. Histidinol-phosphate aminotransferase subfamily. As to quaternary structure, homodimer. Pyridoxal 5'-phosphate is required as a cofactor.

It catalyses the reaction L-histidinol phosphate + 2-oxoglutarate = 3-(imidazol-4-yl)-2-oxopropyl phosphate + L-glutamate. It functions in the pathway amino-acid biosynthesis; L-histidine biosynthesis; L-histidine from 5-phospho-alpha-D-ribose 1-diphosphate: step 7/9. The chain is Histidinol-phosphate aminotransferase 2 (hisC2) from Bradyrhizobium diazoefficiens (strain JCM 10833 / BCRC 13528 / IAM 13628 / NBRC 14792 / USDA 110).